Consider the following 37-residue polypeptide: Cytochrome b6-f complex subunit 5 (37 aa).

A helical membrane pass occupies residues 5–25 (LLSGIVLGLVPVTITGLFVAA).

Belongs to the PetG family. In terms of assembly, the 4 large subunits of the cytochrome b6-f complex are cytochrome b6, subunit IV (17 kDa polypeptide, PetD), cytochrome f and the Rieske protein, while the 4 small subunits are PetG, PetL, PetM and PetN. The complex functions as a dimer.

It localises to the plastid. The protein localises to the chloroplast thylakoid membrane. Functionally, component of the cytochrome b6-f complex, which mediates electron transfer between photosystem II (PSII) and photosystem I (PSI), cyclic electron flow around PSI, and state transitions. PetG is required for either the stability or assembly of the cytochrome b6-f complex. This is Cytochrome b6-f complex subunit 5 from Emiliania huxleyi (Coccolithophore).